We begin with the raw amino-acid sequence, 270 residues long: Thymidine kinase 2, mitochondrial (270 aa).

The transit peptide at 1–38 (MLLRSLRSWAARSPRSVGPGSSGSPGSLDSGAGPLWAP) directs the protein to the mitochondrion. The disordered stretch occupies residues 1–54 (MLLRSLRSWAARSPRSVGPGSSGSPGSLDSGAGPLWAPRRAWPPDKDRENDKEK). Residues 13-34 (SPRSVGPGSSGSPGSLDSGAGP) show a composition bias toward low complexity. The span at 42–54 (WPPDKDRENDKEK) shows a compositional bias: basic and acidic residues. 62-70 (GNIASGKTT) lines the ATP pocket. Glu-138 serves as the catalytic Proton acceptor.

This sequence belongs to the DCK/DGK family. As to quaternary structure, homodimer. As to expression, found in most tissues; highly expressed in liver.

It is found in the mitochondrion. The catalysed reaction is thymidine + ATP = dTMP + ADP + H(+). The enzyme catalyses 2'-deoxycytidine + ATP = dCMP + ADP + H(+). It catalyses the reaction 2'-deoxyuridine + ATP = dUMP + ADP + H(+). Its function is as follows. Phosphorylates thymidine, deoxycytidine, and deoxyuridine in the mitochondrial matrix. In non-replicating cells, where cytosolic dNTP synthesis is down-regulated, mtDNA synthesis depends solely on TK2 and DGUOK. This Mus musculus (Mouse) protein is Thymidine kinase 2, mitochondrial (Tk2).